The following is a 147-amino-acid chain: MVHWSAEEKQLITSVWSKVNVEECGAEALARLLIVYPWTQRFFASFGNLSSPTAIMGNPRVRAHGKKVLSSFGEAVKNLDNIKNTYAKLSELHCDKLHVDPENFRLLGDILIIVLASHFARDFTPACQFAWQKLVNVVAHALARKYH.

The region spanning 3 to 147 (HWSAEEKQLI…VAHALARKYH (145 aa)) is the Globin domain. Residues His64 and His93 each contribute to the heme b site.

It belongs to the globin family. Heterotetramer of two epsilon chains and two alpha chains. Hemoglobin E (Hbe) contains a alpha-A chains while hemoglobin M (Hbm) contains alpha-D chains.

Beta-type chain found in early embryos. This Gallus gallus (Chicken) protein is Hemoglobin subunit epsilon (HBE).